The sequence spans 568 residues: Potassium-transporting ATPase potassium-binding subunit (568 aa).

10 helical membrane passes run 3 to 23, 64 to 84, 133 to 153, 179 to 199, 255 to 275, 281 to 301, 375 to 395, 418 to 438, 497 to 517, and 536 to 556; these read TEIL…YPLG, FLKA…VLLV, FVIM…MAGI, ILLP…TPMG, MVEC…LGFY, LAYS…CINV, FGGV…AVFI, IATI…AISS, IVLI…AGLL, and TFGI…FFPV.

Belongs to the KdpA family. The system is composed of three essential subunits: KdpA, KdpB and KdpC.

It localises to the cell inner membrane. Functionally, part of the high-affinity ATP-driven potassium transport (or Kdp) system, which catalyzes the hydrolysis of ATP coupled with the electrogenic transport of potassium into the cytoplasm. This subunit binds the periplasmic potassium ions and delivers the ions to the membrane domain of KdpB through an intramembrane tunnel. The chain is Potassium-transporting ATPase potassium-binding subunit from Bacteroides thetaiotaomicron (strain ATCC 29148 / DSM 2079 / JCM 5827 / CCUG 10774 / NCTC 10582 / VPI-5482 / E50).